The chain runs to 118 residues: Autophagy-related protein 8 (118 aa).

Residue Gly116 is the site of Phosphatidylethanolamine amidated glycine attachment. Residues 117-118 (SI) constitute a propeptide, removed in mature form.

This sequence belongs to the ATG8 family. In terms of assembly, conjugation to phosphatidylethanolamine (PE) leads to homodimerization. Interacts with ATG1, ATG3, ATG4, ATG7 and ATG12. Post-translationally, the C-terminal Ser-117 and Ile-118 residues of ATG8 are removed by ATG4 to expose Gly-116 at the C-terminus. This Gly-116 forms then a thioester bond with ATG7 (E1-like activating enzyme) before being transferred to ATG3 (the specific E2 conjugating enzyme), in order to be finally amidated with phosphatidylethanolamine. This lipid modification anchors ATG8 to membranes and can be reversed by ATG4, releasing soluble ATG8.

The protein localises to the cytoplasmic vesicle. The protein resides in the cvt vesicle membrane. Its subcellular location is the autophagosome membrane. It is found in the vacuole membrane. In terms of biological role, ubiquitin-like modifier involved in cytoplasm to vacuole transport (Cvt) vesicles and autophagosome formation. With ATG4, mediates the delivery of the vesicles and autophagosomes to the vacuole via the microtubule cytoskeleton. Required for selective autophagic degradation of the nucleus (nucleophagy) as well as for mitophagy which contributes to regulate mitochondrial quantity and quality by eliminating the mitochondria to a basal level to fulfill cellular energy requirements and preventing excess ROS production. Also participates in membrane fusion events that take place in the early secretory pathway. Also involved in endoplasmic reticulum-specific autophagic process and is essential for the survival of cells subjected to severe ER stress. The ATG8-PE conjugate mediates tethering between adjacent membranes and stimulates membrane hemifusion, leading to expansion of the autophagosomal membrane during autophagy. Moreover not only conjugation, but also subsequent ATG8-PE deconjugation is an important step required to facilitate multiple events during macroautophagy, and especially for efficient autophagosome biogenesis, the assembly of ATG9-containing tubulovesicular clusters into phagophores/autophagosomes, and for the disassembly of PAS-associated ATG components. Contributes to conidiation by regulating the conidial levels of the conidiation-related protein CP15 and mediates fungal oxidation resistance by controlling total superoxide dismutase (SOD) activity. The sequence is that of Autophagy-related protein 8 from Beauveria bassiana (strain ARSEF 2860) (White muscardine disease fungus).